The chain runs to 267 residues: MLNIVMIGCGAIGAGVLELLENDPQLRVDAVIVPRDSETQVRHRLASLRRPPRVLSALPAGERPDLLVECAGHRAIEQHVLPALAQGIPCLVVSVGALSEPGLVERLEAAAQAGGSRIELLPGAIGAIDALSAARVGGLESVRYTGRKPASAWLGTPGETVCDLQRLEKARVIFDGSAREAARLYPKNANVAATLSLAGLGLDRTQVRLIADPESCENVHQVEASGAFGGFELTLRGKPLAANPKTSALTVYSVVRALGNHAHAISI.

Positions 124 and 190 each coordinate NAD(+). Histidine 220 is an active-site residue.

The protein belongs to the L-aspartate dehydrogenase family.

The enzyme catalyses L-aspartate + NADP(+) + H2O = oxaloacetate + NH4(+) + NADPH + H(+). It carries out the reaction L-aspartate + NAD(+) + H2O = oxaloacetate + NH4(+) + NADH + H(+). It functions in the pathway cofactor biosynthesis; NAD(+) biosynthesis; iminoaspartate from L-aspartate (dehydrogenase route): step 1/1. Its function is as follows. Specifically catalyzes the NAD or NADP-dependent dehydrogenation of L-aspartate to iminoaspartate. The protein is L-aspartate dehydrogenase of Pseudomonas aeruginosa (strain ATCC 15692 / DSM 22644 / CIP 104116 / JCM 14847 / LMG 12228 / 1C / PRS 101 / PAO1).